The primary structure comprises 115 residues: NADH-ubiquinone oxidoreductase chain 3 (115 aa).

The next 3 membrane-spanning stretches (helical) occupy residues 3–23 (LVIA…VAFW), 55–75 (FFLV…LLPI), and 87–107 (LLSL…YEWL).

The protein belongs to the complex I subunit 3 family. As to quaternary structure, core subunit of respiratory chain NADH dehydrogenase (Complex I) which is composed of 45 different subunits. Interacts with TMEM186. Interacts with TMEM242.

Its subcellular location is the mitochondrion inner membrane. The enzyme catalyses a ubiquinone + NADH + 5 H(+)(in) = a ubiquinol + NAD(+) + 4 H(+)(out). Core subunit of the mitochondrial membrane respiratory chain NADH dehydrogenase (Complex I) which catalyzes electron transfer from NADH through the respiratory chain, using ubiquinone as an electron acceptor. Essential for the catalytic activity of complex I. In Ornithorhynchus anatinus (Duckbill platypus), this protein is NADH-ubiquinone oxidoreductase chain 3.